A 237-amino-acid polypeptide reads, in one-letter code: Large ribosomal subunit protein uL1 (237 aa).

The protein belongs to the universal ribosomal protein uL1 family. In terms of assembly, part of the 50S ribosomal subunit.

In terms of biological role, binds directly to 23S rRNA. The L1 stalk is quite mobile in the ribosome, and is involved in E site tRNA release. Its function is as follows. Protein L1 is also a translational repressor protein, it controls the translation of the L11 operon by binding to its mRNA. This chain is Large ribosomal subunit protein uL1, found in Chloroflexus aggregans (strain MD-66 / DSM 9485).